The primary structure comprises 142 residues: Putative pre-16S rRNA nuclease (142 aa).

Belongs to the YqgF nuclease family.

It is found in the cytoplasm. Could be a nuclease involved in processing of the 5'-end of pre-16S rRNA. This Lactobacillus delbrueckii subsp. bulgaricus (strain ATCC BAA-365 / Lb-18) protein is Putative pre-16S rRNA nuclease.